The sequence spans 147 residues: Peroxynitrite isomerase (147 aa).

His137 is a binding site for heme b.

It belongs to the nitrobindin family. As to quaternary structure, homodimer. Heme b serves as cofactor.

It catalyses the reaction peroxynitrite = nitrate. The protein operates within nitrogen metabolism. Heme-binding protein able to scavenge peroxynitrite and to protect free L-tyrosine against peroxynitrite-mediated nitration, by acting as a peroxynitrite isomerase that converts peroxynitrite to nitrate. Therefore, this protein likely plays a role in peroxynitrite sensing and in the detoxification of reactive nitrogen and oxygen species (RNS and ROS, respectively). Is able to bind nitric oxide (NO) in vitro, but may act as a sensor of peroxynitrite levels in vivo. This chain is Peroxynitrite isomerase, found in Frankia alni (strain DSM 45986 / CECT 9034 / ACN14a).